Here is a 446-residue protein sequence, read N- to C-terminus: Trigger factor (446 aa).

A PPIase FKBP-type domain is found at 163-248 (GDIVTIDFKG…VRGIKRKKLA (86 aa)). A disordered region spans residues 423–446 (SKPVPPREQGAAGETAETAEATPA). The segment covering 432 to 446 (GAAGETAETAEATPA) has biased composition (low complexity).

Belongs to the FKBP-type PPIase family. Tig subfamily.

The protein localises to the cytoplasm. The catalysed reaction is [protein]-peptidylproline (omega=180) = [protein]-peptidylproline (omega=0). Functionally, involved in protein export. Acts as a chaperone by maintaining the newly synthesized protein in an open conformation. Functions as a peptidyl-prolyl cis-trans isomerase. This is Trigger factor from Moorella thermoacetica (strain ATCC 39073 / JCM 9320).